The primary structure comprises 370 residues: Putative glutamate--cysteine ligase 2 (370 aa).

It belongs to the glutamate--cysteine ligase type 2 family. YbdK subfamily.

The catalysed reaction is L-cysteine + L-glutamate + ATP = gamma-L-glutamyl-L-cysteine + ADP + phosphate + H(+). ATP-dependent carboxylate-amine ligase which exhibits weak glutamate--cysteine ligase activity. In Methylibium petroleiphilum (strain ATCC BAA-1232 / LMG 22953 / PM1), this protein is Putative glutamate--cysteine ligase 2.